Here is a 194-residue protein sequence, read N- to C-terminus: Fe/S biogenesis protein NfuA (194 aa).

[4Fe-4S] cluster contacts are provided by cysteine 151 and cysteine 154.

This sequence belongs to the NfuA family. Homodimer. It depends on [4Fe-4S] cluster as a cofactor.

Functionally, involved in iron-sulfur cluster biogenesis. Binds a 4Fe-4S cluster, can transfer this cluster to apoproteins, and thereby intervenes in the maturation of Fe/S proteins. Could also act as a scaffold/chaperone for damaged Fe/S proteins. This Pasteurella multocida (strain Pm70) protein is Fe/S biogenesis protein NfuA.